Here is a 60-residue protein sequence, read N- to C-terminus: Venom protein 4.1 (60 aa).

A signal peptide spans Met1 to Ala26.

The protein belongs to the non-disulfide-bridged peptide (NDBP) superfamily. Expressed by the venom gland.

Its subcellular location is the secreted. The sequence is that of Venom protein 4.1 from Lychas mucronatus (Chinese swimming scorpion).